Reading from the N-terminus, the 887-residue chain is Alanine--tRNA ligase (887 aa).

Zn(2+) contacts are provided by His581, His585, Cys683, and His687.

This sequence belongs to the class-II aminoacyl-tRNA synthetase family. The cofactor is Zn(2+).

The protein resides in the cytoplasm. The catalysed reaction is tRNA(Ala) + L-alanine + ATP = L-alanyl-tRNA(Ala) + AMP + diphosphate. Functionally, catalyzes the attachment of alanine to tRNA(Ala) in a two-step reaction: alanine is first activated by ATP to form Ala-AMP and then transferred to the acceptor end of tRNA(Ala). Also edits incorrectly charged Ser-tRNA(Ala) and Gly-tRNA(Ala) via its editing domain. The chain is Alanine--tRNA ligase from Ehrlichia ruminantium (strain Welgevonden).